A 176-amino-acid chain; its full sequence is Probable DNA-directed RNA polymerase subunit delta (176 aa).

The region spanning 14–81 (KSFIDMAYTL…GENLWGLRDW (68 aa)) is the HTH HARE-type domain. The interval 114 to 176 (LGEDEMDDDD…VFEDEEDFND (63 aa)) is disordered. Acidic residues-rich tracts occupy residues 116 to 145 (EDEMDDDDDIPAQTDDQEELNDPEDEQVEE) and 153 to 176 (VIEEDEDELDEDEEVFEDEEDFND).

It belongs to the RpoE family. RNAP is composed of a core of 2 alpha, a beta and a beta' subunits. The core is associated with a delta subunit and one of several sigma factors.

In terms of biological role, participates in both the initiation and recycling phases of transcription. In the presence of the delta subunit, RNAP displays an increased specificity of transcription, a decreased affinity for nucleic acids, and an increased efficiency of RNA synthesis because of enhanced recycling. The sequence is that of Probable DNA-directed RNA polymerase subunit delta from Staphylococcus aureus (strain JH1).